Consider the following 682-residue polypeptide: Potassium-transporting ATPase ATP-binding subunit (682 aa).

4 helical membrane passes run 44–64 (VMAV…SGHG), 66–86 (AGFG…GNFA), 233–253 (LTFL…GVTL), and 257–277 (LLIA…LPAI). Catalysis depends on Asp310, which acts as the 4-aspartylphosphate intermediate. Residues Asp347, Glu351, 377–384 (FTAQTRMS), and Lys395 each bind ATP. Mg(2+) is bound by residues Asp518 and Asp522. The next 3 helical transmembrane spans lie at 588-608 (FAIL…LNVM), 616-636 (AVLA…PLAL), and 658-678 (GLGG…ALVA).

Belongs to the cation transport ATPase (P-type) (TC 3.A.3) family. Type IA subfamily. The system is composed of three essential subunits: KdpA, KdpB and KdpC.

It is found in the cell inner membrane. The enzyme catalyses K(+)(out) + ATP + H2O = K(+)(in) + ADP + phosphate + H(+). Its function is as follows. Part of the high-affinity ATP-driven potassium transport (or Kdp) system, which catalyzes the hydrolysis of ATP coupled with the electrogenic transport of potassium into the cytoplasm. This subunit is responsible for energy coupling to the transport system and for the release of the potassium ions to the cytoplasm. This chain is Potassium-transporting ATPase ATP-binding subunit, found in Xanthomonas campestris pv. campestris (strain ATCC 33913 / DSM 3586 / NCPPB 528 / LMG 568 / P 25).